Here is a 37-residue protein sequence, read N- to C-terminus: Large ribosomal subunit protein bL36A (37 aa).

The protein belongs to the bacterial ribosomal protein bL36 family.

The protein is Large ribosomal subunit protein bL36A of Clavibacter sepedonicus (Clavibacter michiganensis subsp. sepedonicus).